Here is a 71-residue protein sequence, read N- to C-terminus: Protein KleB (71 aa).

Residues 9–28 constitute a DNA-binding region (H-T-H motif); sequence IETCCRRCGKSIRTLSHTII.

The sequence is that of Protein KleB (kleB) from Escherichia coli.